The following is a 509-amino-acid chain: Histidine ammonia-lyase (509 aa).

Residues 142–144 (ASG) constitute a cross-link (5-imidazolinone (Ala-Gly)). 2,3-didehydroalanine (Ser) is present on Ser143.

Belongs to the PAL/histidase family. Post-translationally, contains an active site 4-methylidene-imidazol-5-one (MIO), which is formed autocatalytically by cyclization and dehydration of residues Ala-Ser-Gly.

It localises to the cytoplasm. The enzyme catalyses L-histidine = trans-urocanate + NH4(+). The protein operates within amino-acid degradation; L-histidine degradation into L-glutamate; N-formimidoyl-L-glutamate from L-histidine: step 1/3. This chain is Histidine ammonia-lyase, found in Sphingopyxis alaskensis (strain DSM 13593 / LMG 18877 / RB2256) (Sphingomonas alaskensis).